Consider the following 587-residue polypeptide: MSNLMDKHTQKIDPQSLQHMLSVLRLEQLGDLKLTNVSLLDLINGEVIPGPILIDKGHIIAVGQEVDLLAAVRVVDCHGQIAVPGFIDAHMHVESSTMTPFEFERTTLPLGTTSIVCDPHELVNVMGRQGIDWFLRCSETMHQNMFVQISSCVPAVAGLDINGSDFSLDEMAAYREHKHVLGLAEVMDYPAVINGEQAMQDKLTTFNNLNLDGHSPLLSGLSLSAYVACGIQNCHETTNVEEGKEKLAKGMAVIMREGSVAKNLDALAPLITDFSSPYCLLCTDDRNPHEIANEGHINFMVKRLIQQHDIPAYLAYRVASWSAAKHFGLRRLGLIAPGYRADINLVSTLDAVDIQRVLIAGEFVDELTLESELEAKLEASSPPLHNTVKHRPITEAELTIPLKEGEYRVIGVVKDELLTNHLVCHFDGQHFAEPGVNKLAVIERYGHQLPPALSLVKGFDIEQGAIATSVGHDSHNIVVIGADEKSMAHAVNHLLEIGGGFCVVQQGEVTADLMLPLGGIMSLERSEKIAEQISDLKTAVKAIGVSLSEPFVQMSFLSLPVIPSLKMTVKGLFDVDQFKFVSLRVDS.

This sequence belongs to the metallo-dependent hydrolases superfamily. Adenine deaminase family. The cofactor is Mn(2+).

It catalyses the reaction adenine + H2O + H(+) = hypoxanthine + NH4(+). The chain is Adenine deaminase from Shewanella halifaxensis (strain HAW-EB4).